The primary structure comprises 82 residues: RNA-binding protein Hfq (82 aa).

The region spanning 11 to 71 is the Sm domain; the sequence is DTFLNHVRKT…ISTIMPGAPI (61 aa).

This sequence belongs to the Hfq family. As to quaternary structure, homohexamer.

In terms of biological role, RNA chaperone that binds small regulatory RNA (sRNAs) and mRNAs to facilitate mRNA translational regulation in response to envelope stress, environmental stress and changes in metabolite concentrations. Also binds with high specificity to tRNAs. This is RNA-binding protein Hfq from Bradyrhizobium diazoefficiens (strain JCM 10833 / BCRC 13528 / IAM 13628 / NBRC 14792 / USDA 110).